Here is a 357-residue protein sequence, read N- to C-terminus: COP9 signalosome complex subunit 5a (357 aa).

Methionine 1 carries the N-acetylmethionine modification. One can recognise an MPN domain in the interval 59–196; the sequence is VHISALALLK…IGAFRTYPEG (138 aa). Zn(2+)-binding residues include histidine 142, histidine 144, and aspartate 155. Residues 142-155 carry the JAMM motif motif; it reads HSHPGYGCWLSGID. Positions 338–357 are disordered; sequence ARQSKKSADDSSDPEPMITS.

This sequence belongs to the peptidase M67A family. CSN5 subfamily. As to quaternary structure, component of the CSN complex, probably composed of CSN1, CSN2, CSN3, CSN4, CSN5 (CSN5A or CSN5B), CSN6 (CSN6A or CSN6B), CSN7 and CSN8. CSN5A or CSN5B are present within distinct CSN complexes each containing only one copy of CSN5. Interacts with itself. In the complex, it is located in the center and probably interacts directly with CSN4 and CSN6A or CSN6B. Present also in subcomplex forms which inculdes CSN3. Also exists as monomeric form. Interacts with CYT1 in vitro, but not in planta. A divalent metal cation serves as cofactor. As to expression, ubiquitously expressed. Highly expressed in flowers and roots. Expressed at lower level in seedlings and siliques.

It localises to the cytoplasm. The protein resides in the nucleus. In terms of biological role, probable protease subunit of the COP9 signalosome complex (CSN), a complex involved in various cellular and developmental processes such as photomorphogenesis and auxin and jasmonate responses. The CSN complex is an essential regulator of the ubiquitin (Ubl) conjugation pathway by mediating the deneddylation of the cullin subunits of the SCF-type E3 ligase complexes, leading to decrease the Ubl ligase activity of SCF. In the complex, it probably acts as the catalytic center that mediates the cleavage of Nedd8 from cullins. It however has no metalloprotease activity by itself and requires the other subunits of the CSN complex. The CSN complex is involved in repression of photomorphogenesis in darkness by regulating the activity of COP1-containing Ubl ligase complexes. The complex is also required for degradation of PSIAA6 by regulating the activity of the Ubl ligase SCF-TIR complex. Involved in CSN's deneddylation/derubylation activity. Required for the deneddylation of all cullins. Essential for the structural integrity of the CSN holocomplex. This is COP9 signalosome complex subunit 5a from Arabidopsis thaliana (Mouse-ear cress).